We begin with the raw amino-acid sequence, 260 residues long: Putative hydro-lyase Dshi_0610 (260 aa).

The protein belongs to the D-glutamate cyclase family.

The chain is Putative hydro-lyase Dshi_0610 from Dinoroseobacter shibae (strain DSM 16493 / NCIMB 14021 / DFL 12).